We begin with the raw amino-acid sequence, 453 residues long: Tubulin delta chain (453 aa).

143–149 (AGGTGSG) lines the GTP pocket.

This sequence belongs to the tubulin family. In terms of assembly, found in a complex with TEDC1, TEDC2, TUBE1 and TUBD1.

Its subcellular location is the nucleus. The protein resides in the cytoplasm. It is found in the cytoskeleton. It localises to the microtubule organizing center. The protein localises to the centrosome. Its subcellular location is the centriole. The protein resides in the cell projection. It is found in the cilium. Functionally, acts as a positive regulator of hedgehog signaling and regulates ciliary function. The polypeptide is Tubulin delta chain (TUBD1) (Canis lupus familiaris (Dog)).